The primary structure comprises 346 residues: MRSQDLHQRLADLGAKPLHCGRIVRAWLQGRALDACTARQRAEDFLPLGVRHGLPQVAAELEGIARLHSEHPASDGSSRLLVELADRQMVESVLLPRGGLCVSTQVGCAVGCVFCMTGRSGLLRQVGSLEMVAQVVLARRRRAVKKVVFMGMGEPAHNLDNVLEAIDLLGTDGGIGHKNLVFSTVGDPRVFERLPRQRVKPALALSLHSTRAELRRQLLPKAPPLSPEELVEAGEAYARRVDYPIQYQWTLLEGINDSLEEMDGILRLLKGRFAVMNLIPYNSMDGDAYRRPSGERIVELVRYLHSRGVLTKVRNSAGQDIDGGCGQLRARATQGTAERRIPARQA.

Catalysis depends on Glu-91, which acts as the Proton acceptor. Residues 94–320 (LLPRGGLCVS…TKVRNSAGQD (227 aa)) enclose the Radical SAM core domain. Residues Cys-101 and Cys-325 are joined by a disulfide bond. [4Fe-4S] cluster-binding residues include Cys-108, Cys-112, and Cys-115. S-adenosyl-L-methionine contacts are provided by residues 153 to 154 (GE), Ser-183, 206 to 208 (SLH), and Asn-282. The S-methylcysteine intermediate role is filled by Cys-325.

The protein belongs to the radical SAM superfamily. RlmN family. It depends on [4Fe-4S] cluster as a cofactor.

It is found in the cytoplasm. This is Probable RNA methyltransferase PA1839 from Pseudomonas aeruginosa (strain ATCC 15692 / DSM 22644 / CIP 104116 / JCM 14847 / LMG 12228 / 1C / PRS 101 / PAO1).